The chain runs to 2411 residues: Polyprotein P1234 (2411 aa).

One can recognise an Alphavirus-like MT domain in the interval 30–257 (EAVQTTPNDH…ESRKLLQSWH (228 aa)). The tract at residues 242–261 (GSTLYTESRKLLQSWHLPST) is nsP1 membrane-binding. 2 S-palmitoyl cysteine; by host lipidation sites follow: C415 and C417. Residues 688–840 (ELVNPPFHEF…HDICSEVFHK (153 aa)) enclose the (+)RNA virus helicase ATP-binding domain. Position 719–726 (719–726 (GVPGSGKS)) interacts with a ribonucleoside 5'-triphosphate. The (+)RNA virus helicase C-terminal domain maps to 841–989 (SISRRCTQDI…IAEWEAEHQG (149 aa)). One can recognise a Peptidase C9 domain in the interval 1002 to 1325 (NTFMNKVNVC…RKANSIFQNT (324 aa)). Residues 1003 to 1022 (TFMNKVNVCWAKTLTPVLET) form a nucleolus localization signal region. Residue C1011 is the For cysteine protease nsP2 activity of the active site. Positions 1056–1065 (TKMYGFDLDT) match the Nuclear export signal motif. H1081 (for cysteine protease nsP2 activity) is an active-site residue. The Nuclear localization signal motif lies at 1180–1184 (PNKKI). The Macro domain maps to 1332-1491 (APAYRVKRGD…KIKEAIDHRT (160 aa)). D1341, N1355, G1363, G1443, I1444, and Y1445 together coordinate ADP-D-ribose. 4 residues coordinate Zn(2+): C1593, C1595, C1618, and C1636. A disordered region spans residues 1681-1720 (DSSIGSLPVGDTRPIPAPRTIFRPVPAPRAPVLRTTPPPK). Short sequence motifs (FGDF; binding to host G3BP1) lie at residues 1760-1763 (FGDF) and 1778-1781 (FGDF). The 116-residue stretch at 2165-2280 (DHVLETDIAS…HGIISDKLMA (116 aa)) folds into the RdRp catalytic domain.

In terms of assembly, interacts with non-structural protein 3. Interacts with RNA-directed RNA polymerase nsP4. Interacts with protease nsP2. interacts with itself. As to quaternary structure, interacts with mRNA-capping enzyme nsP1. Interacts with host DDX1. Interacts with host DDX3. Interacts (via C-terminus) with host G3BP1; this interaction inhibits the formation of host stress granules on viral mRNAs and the nsp3-G3BP1 complexes bind viral RNAs and probably orchestrate the assembly of viral replication complexes. Interacts (via C-terminus) with host G3BP2; this interaction inhibits the formation of host stress granules on viral mRNAs and the nsp3-G3BP2 complexes bind viral RNAs and probably orchestrate the assembly of viral replication complexes. Interacts with mRNA-capping enzyme nsP1. Interacts with protease nsP2. interacts with itself. In terms of assembly, interacts with RNA-directed RNA polymerase nsP4. Interacts with mRNA-capping enzyme nsP1. Interacts with KPNA1/karyopherin-alpha1; this interaction probably allows the active transport of protease nsP2 into the host nucleus. The cofactor is Mg(2+). It depends on Mn(2+) as a cofactor. In terms of processing, specific enzymatic cleavages in vivo yield mature proteins. The processing of the polyprotein is temporally regulated. In early stages (1.7 hpi), P1234 is first cleaved in trans through its nsP2 protease activity, releasing P123' and nsP4, which associate to form the early replication complex. At the same time, P1234 is also cut at the nsP1/nsP2 site early in infection but with lower efficiency. After replication of the viral minus-strand RNAs (4 hpi), the polyproteins are cut at the nsP1/nsP2 and nsP2/nsP3 sites very efficiently, preventing accumulation of P123' and P1234 and allowing the formation of the late replication complex. NsP3'/nsP4 site is not cleaved anymore and P34 is produced rather than nsP4. Post-translationally, specific enzymatic cleavages in vivo yield mature proteins. The processing of the polyprotein is temporally regulated. In early stages (1.7 hpi), P123 is cleaved at the nsP1/nsP2 site with low efficiency. After replication of the viral minus-strand RNAs (4 hpi), the polyproteins are cut at the nsP1/nsP2 and nsP2/nsP3 sites very efficiently, preventing accumulation of P123 and allowing the formation of the late replication complex. Specific enzymatic cleavages in vivo yield mature proteins. The processing of the polyprotein is temporally regulated. In early stages (1.7 hpi), P123' is cleaved at the nsP1/nsP2 site with low efficiency. After replication of the viral minus-strand RNAs (4 hpi), the polyproteins are cut at the nsP1/nsP2 and nsP2/nsP3 sites very efficiently, preventing accumulation of P123' and allowing the formation of the late replication complex. In terms of processing, palmitoylated by host palmitoyltransferases ZDHHC2 and ZDHHC19. Post-translationally, phosphorylated by host on serines and threonines. Ubiquitinated; targets the protein for rapid degradation via the ubiquitin system. Nsp4 is present in extremely low quantities due to low frequency of translation through the amber stop-codon and the degradation by the ubiquitin pathway.

It localises to the host cytoplasmic vesicle membrane. The protein resides in the host cell membrane. The protein localises to the host cell projection. Its subcellular location is the host filopodium. It is found in the host nucleus. It localises to the host cytoplasm. The catalysed reaction is GTP + S-adenosyl-L-methionine = N(7)-methyl-GTP + S-adenosyl-L-homocysteine. It carries out the reaction N(7)-methyl-GTP + L-histidyl-[protein] = N(tele)-(N(7)-methylguanosine 5'-phospho)-L-histidyl-[protein] + diphosphate. It catalyses the reaction N(tele)-(N(7)-methylguanosine 5'-phospho)-L-histidyl-[protein] + a 5'-end diphospho-(purine-ribonucleoside) in mRNA + H(+) = a 5'-end (N(7)-methyl 5'-triphosphoguanosine)-(purine-ribonucleoside) in mRNA + L-histidyl-[protein]. The enzyme catalyses a 5'-end triphospho-ribonucleoside in mRNA + H2O = a 5'-end diphospho-ribonucleoside in mRNA + phosphate + H(+). The catalysed reaction is a ribonucleoside 5'-triphosphate + H2O = a ribonucleoside 5'-diphosphate + phosphate + H(+). It carries out the reaction ATP + H2O = ADP + phosphate + H(+). It catalyses the reaction RNA(n) + a ribonucleoside 5'-triphosphate = RNA(n+1) + diphosphate. The enzyme catalyses RNA(n) + ATP = RNA(n)-3'-adenine ribonucleotide + diphosphate. The catalysed reaction is 4-O-(ADP-D-ribosyl)-L-aspartyl-[protein] + H2O = L-aspartyl-[protein] + ADP-D-ribose + H(+). It carries out the reaction 5-O-(ADP-D-ribosyl)-L-glutamyl-[protein] + H2O = L-glutamyl-[protein] + ADP-D-ribose + H(+). It catalyses the reaction ADP-alpha-D-ribose 1''-phosphate + H2O = ADP-D-ribose + phosphate. Functionally, inactive precursor of the viral replicase, which is activated by cleavages carried out by the viral protease nsP2. Its function is as follows. The early replication complex formed by the polyprotein P123 and nsP4 synthesizes minus-strand RNAs. As soon P123 is cleaved into mature proteins, the plus-strand RNAs synthesis begins. The early replication complex formed by the polyprotein P123' and nsP4 synthesizes minus-strand RNAs. Polyprotein P123' is a short-lived polyprotein that accumulates during early stage of infection. As soon P123' is cleaved into mature proteins, the plus-strand RNAs synthesis begins. In terms of biological role, cytoplasmic capping enzyme that catalyzes two virus-specific reactions: methyltransferase and nsP1 guanylyltransferase. mRNA-capping is necessary since all viral RNAs are synthesized in the cytoplasm, and host capping enzymes are restricted to the nucleus. The enzymatic reaction involves a covalent link between 7-methyl-GMP and nsP1, whereas eukaryotic capping enzymes form a covalent complex only with GMP. nsP1 capping consists in the following reactions: GTP is first methylated into 7-methyl-GMP and then is covalently linked to nsP1 to form the m7GMp-nsP1 complex from which 7-methyl-GMP complex is transferred to the mRNA to create the cap structure. NsP1 is needed for the initiation of the minus-strand RNAs synthesis. Probably serves as a membrane anchor for the replication complex composed of nsP1-nsP4. Palmitoylated nsP1 is remodeling host cell cytoskeleton, and induces filopodium-like structure formation at the surface of the host cell. Functionally, multifunctional protein whose N-terminus is part of the RNA polymerase complex and displays NTPase, RNA triphosphatase and helicase activities. NTPase and RNA triphosphatase are involved in viral RNA capping and helicase keeps a check on the dsRNA replication intermediates. The C-terminus harbors a protease that specifically cleaves the polyproteins and releases the mature proteins. Required for the shutoff of minus-strand RNAs synthesis. Specifically inhibits the host IFN response by promoting the nuclear export of host STAT1. Also inhibits host transcription by inducing rapid proteasome-dependent degradation of POLR2A, a catalytic subunit of the RNAPII complex. The resulting inhibition of cellular protein synthesis serves to ensure maximal viral gene expression and to evade host immune response. Its function is as follows. Seems to be essential for minus-strand RNAs and subgenomic 26S mRNAs synthesis. Displays mono-ADP-ribosylhydrolase activity. ADP-ribosylation is a post-translational modification that controls various processes of the host cell and the virus probably needs to revert it for optimal viral replication. Binds proteins of FXR family and sequesters them into the viral RNA replication complexes thereby inhibiting the formation of host stress granules on viral mRNAs. The nsp3-FXR complexes bind viral RNAs and probably orchestrate the assembly of viral replication complexes, thanks to the ability of FXR family members to self-assemble and bind DNA. Seems to be essential for minus-strand RNAs and subgenomic 26S mRNAs synthesis. Displays mono-ADP-ribosylhydrolase activity. ADP-ribosylation is a post-translantional modification that controls various processes of the host cell and the virus probably needs to revert it for optimal viral replication. Binds proteins of G3BP family and sequesters them into the viral RNA replication complexes thereby inhibiting the formation of host stress granules on viral mRNAs. The nsp3'-G3BP complexes bind viral RNAs and probably orchestrate the assembly of viral replication complexes, thanks to the ability of G3BP family members to self-assemble and bind DNA. In terms of biological role, RNA dependent RNA polymerase. Replicates genomic and antigenomic RNA by recognizing replications specific signals. The early replication complex formed by the polyprotein P123 and nsP4 synthesizes minus-strand RNAs. The late replication complex composed of fully processed nsP1-nsP4 is responsible for the production of genomic and subgenomic plus-strand RNAs. The core catalytic domain of nsP4 also possesses terminal adenylyltransferase (TATase) activity that is probably involved in maintenance and repair of the poly(A) tail, an element required for replication of the viral genome. The protein is Polyprotein P1234 of Barmah forest virus (BFV).